A 476-amino-acid chain; its full sequence is Argininosuccinate lyase (476 aa).

Belongs to the lyase 1 family. Argininosuccinate lyase subfamily.

The protein localises to the cytoplasm. The enzyme catalyses 2-(N(omega)-L-arginino)succinate = fumarate + L-arginine. Its pathway is amino-acid biosynthesis; L-arginine biosynthesis; L-arginine from L-ornithine and carbamoyl phosphate: step 3/3. The protein is Argininosuccinate lyase of Nitrosospira multiformis (strain ATCC 25196 / NCIMB 11849 / C 71).